Reading from the N-terminus, the 248-residue chain is Pyridoxine 5'-phosphate synthase (248 aa).

A 3-amino-2-oxopropyl phosphate-binding site is contributed by Asn11. Residue 13–14 (DH) coordinates 1-deoxy-D-xylulose 5-phosphate. Arg22 is a binding site for 3-amino-2-oxopropyl phosphate. Catalysis depends on His47, which acts as the Proton acceptor. 1-deoxy-D-xylulose 5-phosphate contacts are provided by Arg49 and His54. Glu74 acts as the Proton acceptor in catalysis. Position 104 (Thr104) interacts with 1-deoxy-D-xylulose 5-phosphate. His198 acts as the Proton donor in catalysis. Residues Gly199 and 220–221 (GH) each bind 3-amino-2-oxopropyl phosphate.

Belongs to the PNP synthase family. Homooctamer; tetramer of dimers.

It localises to the cytoplasm. The catalysed reaction is 3-amino-2-oxopropyl phosphate + 1-deoxy-D-xylulose 5-phosphate = pyridoxine 5'-phosphate + phosphate + 2 H2O + H(+). It functions in the pathway cofactor biosynthesis; pyridoxine 5'-phosphate biosynthesis; pyridoxine 5'-phosphate from D-erythrose 4-phosphate: step 5/5. Functionally, catalyzes the complicated ring closure reaction between the two acyclic compounds 1-deoxy-D-xylulose-5-phosphate (DXP) and 3-amino-2-oxopropyl phosphate (1-amino-acetone-3-phosphate or AAP) to form pyridoxine 5'-phosphate (PNP) and inorganic phosphate. The protein is Pyridoxine 5'-phosphate synthase of Ruegeria pomeroyi (strain ATCC 700808 / DSM 15171 / DSS-3) (Silicibacter pomeroyi).